The sequence spans 207 residues: Large ribosomal subunit protein uL4 (207 aa).

It belongs to the universal ribosomal protein uL4 family. Part of the 50S ribosomal subunit.

Functionally, one of the primary rRNA binding proteins, this protein initially binds near the 5'-end of the 23S rRNA. It is important during the early stages of 50S assembly. It makes multiple contacts with different domains of the 23S rRNA in the assembled 50S subunit and ribosome. Forms part of the polypeptide exit tunnel. The protein is Large ribosomal subunit protein uL4 of Rickettsia africae (strain ESF-5).